Here is a 421-residue protein sequence, read N- to C-terminus: Enolase (421 aa).

Glu-207 (proton donor) is an active-site residue. Mg(2+)-binding residues include Asp-244, Glu-285, and Asp-312. Lys-337 (proton acceptor) is an active-site residue. Lys-337, Arg-366, Ser-367, and Lys-388 together coordinate (2R)-2-phosphoglycerate.

Belongs to the enolase family. Mg(2+) is required as a cofactor.

It localises to the cytoplasm. The protein resides in the secreted. The protein localises to the cell surface. It catalyses the reaction (2R)-2-phosphoglycerate = phosphoenolpyruvate + H2O. The protein operates within carbohydrate degradation; glycolysis; pyruvate from D-glyceraldehyde 3-phosphate: step 4/5. In terms of biological role, catalyzes the reversible conversion of 2-phosphoglycerate (2-PG) into phosphoenolpyruvate (PEP). It is essential for the degradation of carbohydrates via glycolysis. This is Enolase from Ehrlichia ruminantium (strain Gardel).